A 426-amino-acid polypeptide reads, in one-letter code: MEPSSWSGSESPAENMERMSDSADKPIDNDAEGVWSPDIEQSFQEALAIYPPCGRRKIILSDEGKMYGRNELIARYIKLRTGKTRTRKQVSSHIQVLARRKSRDFHSKLKDQTAKDKALQHMAAMSSAQIVSATAIHNKLGLPGIPRPTFPGAPGFWPGMIQTGQPGSSQDVKPFVQQAYPIQPAVTAPIPGFEPASAPAPSVPAWQGRSIGTTKLRLVEFSAFLEQQRDPDSYNKHLFVHIGHANHSYSDPLLESVDIRQIYDKFPEKKGGLKELFGKGPQNAFFLVKFWADLNCNIQDDAGAFYGVTSQYESSENMTVTCSTKVCSFGKQVVEKVETEYARFENGRFVYRINRSPMCEYMINFIHKLKHLPEKYMMNSVLENFTILLVVTNRDTQETLLCMACVFEVSNSEHGAQHHIYRLVKD.

The residue at position 1 (methionine 1) is an N-acetylmethionine. Polar residues predominate over residues 1–12 (MEPSSWSGSESP). A disordered region spans residues 1–31 (MEPSSWSGSESPAENMERMSDSADKPIDNDA). Position 11 is a phosphoserine (serine 11). Basic and acidic residues predominate over residues 15-28 (NMERMSDSADKPID). The segment at residues 28 to 104 (DNDAEGVWSP…QVLARRKSRD (77 aa)) is a DNA-binding region (TEA). The residue at position 108 (lysine 108) is an N6-lactoyllysine. The transcriptional activation stretch occupies residues 167 to 426 (GSSQDVKPFV…QHHIYRLVKD (260 aa)).

Interacts with YAP1 and WWTR1/TAZ. Lactylation by AARS1 promotes nuclear localization and stabilization of YAP1, leading to increased Hippo signaling pathway. Delactylated by SIRT1. Preferentially expressed in skeletal muscle. Lower levels in pancreas, placenta, and heart.

The protein resides in the nucleus. Transcription factor which plays a key role in the Hippo signaling pathway, a pathway involved in organ size control and tumor suppression by restricting proliferation and promoting apoptosis. The core of this pathway is composed of a kinase cascade wherein MST1/MST2, in complex with its regulatory protein SAV1, phosphorylates and activates LATS1/2 in complex with its regulatory protein MOB1, which in turn phosphorylates and inactivates YAP1 oncoprotein and WWTR1/TAZ. Acts by mediating gene expression of YAP1 and WWTR1/TAZ, thereby regulating cell proliferation, migration and epithelial mesenchymal transition (EMT) induction. Binds specifically and cooperatively to the SPH and GT-IIC 'enhansons' (5'-GTGGAATGT-3') and activates transcription in vivo in a cell-specific manner. The activation function appears to be mediated by a limiting cell-specific transcriptional intermediary factor (TIF). Involved in cardiac development. Binds to the M-CAT motif. This is Transcriptional enhancer factor TEF-1 (TEAD1) from Homo sapiens (Human).